The following is a 752-amino-acid chain: Zinc finger protein 425 (752 aa).

In terms of domain architecture, KRAB spans 9–80 (VTFDDVALYF…EQGCLDKTRR (72 aa)). 19 C2H2-type zinc fingers span residues 190–212 (YSCYVCRKVFQVRRDLLKHKRSH), 246–268 (FQCSECEKSYFLKGSLVTHQVVH), 274–296 (YPCPECDKTFRYRANLKKHLCLH), 302–324 (FCCGECGRAFVQQCELTEHLRLH), 330–352 (FQCPQCDRCFRLKRGMKVHLTQH), 358–380 (FHCPECGRSFSRKAALKTHQRTH), 386–408 (FSCGECGRKFIYKIKLDEHIRVH), 414–436 (FSCPECNKSFRLKRSLKAHGLQH), 442–464 (FQCPECSRGFFWRNAMRAHQRLH), 470–492 (FPCAECGKRFTRPSKLACHTRVH), 498–520 (FPCGECKKTFSQQSRLTQHLKVH), 526–548 (FSCAECGRSFRRRAHLTEHTRLH), 554–576 (FQCPECDKSFSWKASMKFHQRMH), 582–604 (FACGECDKTYTHQSQLTEHLRLH), 610–632 (YQCPECEKTFRLKGNLKSHLLQH), 638–660 (FSCVMCGKSFTQQYRLTEHIRVH), 666–688 (FQCPECDKSYCIRGSLKVHLYKH), 694–716 (FQCPECGKGFLQKRSLKAHLCLH), and 722–744 (FSCDECGRSFTYVGALKTHIAVH).

This sequence belongs to the krueppel C2H2-type zinc-finger protein family.

The protein localises to the nucleus. The protein resides in the cytoplasm. Acts as a transcriptional repressor. This chain is Zinc finger protein 425 (ZNF425), found in Homo sapiens (Human).